Consider the following 289-residue polypeptide: Probable 2-keto-3-deoxyxylonate dehydratase (289 aa).

Mg(2+) contacts are provided by E144, E146, and D164.

It belongs to the FAH family.

The catalysed reaction is 2-dehydro-3-deoxy-D-arabinonate = 2,5-dioxopentanoate + H2O. The protein operates within carbohydrate metabolism; D-xylose degradation. Functionally, probable 2-keto-3-deoxyxylonate dehydratase involved in the degradation of D-xylose, a major component of hemicelluloses such as xylan. Catalyzes the fourth reaction in the xylose utilization pathway through dehydratation of 2-dehydro-3-deoxy-D-xylonate into alpha-ketoglutarate semialdehyde (2,5-dioxopentanoate). The protein is Probable 2-keto-3-deoxyxylonate dehydratase of Haloferax volcanii (strain ATCC 29605 / DSM 3757 / JCM 8879 / NBRC 14742 / NCIMB 2012 / VKM B-1768 / DS2) (Halobacterium volcanii).